A 64-amino-acid polypeptide reads, in one-letter code: Large ribosomal subunit protein bL35 (64 aa).

The protein belongs to the bacterial ribosomal protein bL35 family.

In Chlorobium limicola (strain DSM 245 / NBRC 103803 / 6330), this protein is Large ribosomal subunit protein bL35.